Here is a 444-residue protein sequence, read N- to C-terminus: MAERKYFGTDGVRGKVGQFPITPDFALKLGWAAGKVLATQGSKQVLIGKDTRISGYMLESALEAGLAAAGLSAAFTGPMPTPAIAYLTRTFRAEAGIVISASHNPYDDNGIKFFSAIGEKLPDEVEEAIEAMLDQPMDCVESAELGRASRINDAAGRYIEFCKSTFPSHLSLDGYKIVVDCANGATYHIAPNVMRELGAEVIEIGTHPNGLNINEKCGATDIKALQQVVVEAGADVGLAYDGDGDRLIMVDHLGNKVDGDQILFIIAREALCSGKLHGGVVGTLMSNMSLELALKELAIPFARANVGDRYVLEVLKEKGWKLGGENSGHIIVLDKNTTGDGIVASLEVLAAMASHKLSLNDLAKAVPLFPQVLINVRFAGGANPLDSEDVKAVAKAVEQRLAGKGRILLRKSGTEPLIRVMVECEDGALAQSCAEEISEAVKRN.

Ser102 functions as the Phosphoserine intermediate in the catalytic mechanism. Mg(2+) contacts are provided by Ser102, Asp241, Asp243, and Asp245. Position 102 is a phosphoserine (Ser102).

Belongs to the phosphohexose mutase family. Mg(2+) is required as a cofactor. In terms of processing, activated by phosphorylation.

It carries out the reaction alpha-D-glucosamine 1-phosphate = D-glucosamine 6-phosphate. Its function is as follows. Catalyzes the conversion of glucosamine-6-phosphate to glucosamine-1-phosphate. The polypeptide is Phosphoglucosamine mutase (Glaesserella parasuis serovar 5 (strain SH0165) (Haemophilus parasuis)).